An 82-amino-acid polypeptide reads, in one-letter code: Small ribosomal subunit protein bS18 (82 aa).

The disordered stretch occupies residues 1–20; that stretch reads MVDINQIPTRRPFHRRRKTC.

The protein belongs to the bacterial ribosomal protein bS18 family. In terms of assembly, part of the 30S ribosomal subunit. Forms a tight heterodimer with protein bS6.

Functionally, binds as a heterodimer with protein bS6 to the central domain of the 16S rRNA, where it helps stabilize the platform of the 30S subunit. In Brucella anthropi (strain ATCC 49188 / DSM 6882 / CCUG 24695 / JCM 21032 / LMG 3331 / NBRC 15819 / NCTC 12168 / Alc 37) (Ochrobactrum anthropi), this protein is Small ribosomal subunit protein bS18.